Here is a 214-residue protein sequence, read N- to C-terminus: Pyridoxine/pyridoxamine 5'-phosphate oxidase (214 aa).

Substrate is bound by residues 9–12 and lysine 67; that span reads RREY. FMN contacts are provided by residues 62-67, 77-78, arginine 83, lysine 84, and glutamine 106; these read RTVLLK and YS. Residues tyrosine 124, arginine 128, and serine 132 each coordinate substrate. Residues 141 to 142 and tryptophan 186 contribute to the FMN site; that span reads QS. Residue 192 to 194 participates in substrate binding; sequence RLH. Residue arginine 196 coordinates FMN.

It belongs to the pyridoxamine 5'-phosphate oxidase family. Homodimer. Requires FMN as cofactor.

The enzyme catalyses pyridoxamine 5'-phosphate + O2 + H2O = pyridoxal 5'-phosphate + H2O2 + NH4(+). It catalyses the reaction pyridoxine 5'-phosphate + O2 = pyridoxal 5'-phosphate + H2O2. It participates in cofactor metabolism; pyridoxal 5'-phosphate salvage; pyridoxal 5'-phosphate from pyridoxamine 5'-phosphate: step 1/1. Its pathway is cofactor metabolism; pyridoxal 5'-phosphate salvage; pyridoxal 5'-phosphate from pyridoxine 5'-phosphate: step 1/1. Catalyzes the oxidation of either pyridoxine 5'-phosphate (PNP) or pyridoxamine 5'-phosphate (PMP) into pyridoxal 5'-phosphate (PLP). This is Pyridoxine/pyridoxamine 5'-phosphate oxidase from Porphyromonas gingivalis (strain ATCC BAA-308 / W83).